The following is a 352-amino-acid chain: N-acetyl-gamma-glutamyl-phosphate reductase (352 aa).

C155 is an active-site residue.

Belongs to the NAGSA dehydrogenase family. Type 1 subfamily.

The protein localises to the cytoplasm. The enzyme catalyses N-acetyl-L-glutamate 5-semialdehyde + phosphate + NADP(+) = N-acetyl-L-glutamyl 5-phosphate + NADPH + H(+). It functions in the pathway amino-acid biosynthesis; L-arginine biosynthesis; N(2)-acetyl-L-ornithine from L-glutamate: step 3/4. Functionally, catalyzes the NADPH-dependent reduction of N-acetyl-5-glutamyl phosphate to yield N-acetyl-L-glutamate 5-semialdehyde. The sequence is that of N-acetyl-gamma-glutamyl-phosphate reductase from Synechococcus elongatus (strain ATCC 33912 / PCC 7942 / FACHB-805) (Anacystis nidulans R2).